Reading from the N-terminus, the 233-residue chain is Superoxide dismutase [Mn] 3.4, mitochondrial (233 aa).

The N-terminal 29 residues, 1-29 (MALRTLASKNALSFALGGAARPSAASARG), are a transit peptide targeting the mitochondrion. Histidine 57, histidine 105, aspartate 194, and histidine 198 together coordinate Mn(2+).

This sequence belongs to the iron/manganese superoxide dismutase family. Homotetramer. Mn(2+) serves as cofactor.

The protein resides in the mitochondrion matrix. It carries out the reaction 2 superoxide + 2 H(+) = H2O2 + O2. Functionally, destroys superoxide anion radicals which are normally produced within the cells and which are toxic to biological systems. This chain is Superoxide dismutase [Mn] 3.4, mitochondrial (SODA.3), found in Zea mays (Maize).